Here is a 71-residue protein sequence, read N- to C-terminus: DNA-directed RNA polymerase subunit omega (71 aa).

It belongs to the RNA polymerase subunit omega family. As to quaternary structure, the RNAP catalytic core consists of 2 alpha, 1 beta, 1 beta' and 1 omega subunit. When a sigma factor is associated with the core the holoenzyme is formed, which can initiate transcription.

It carries out the reaction RNA(n) + a ribonucleoside 5'-triphosphate = RNA(n+1) + diphosphate. In terms of biological role, promotes RNA polymerase assembly. Latches the N- and C-terminal regions of the beta' subunit thereby facilitating its interaction with the beta and alpha subunits. The polypeptide is DNA-directed RNA polymerase subunit omega (Levilactobacillus brevis (strain ATCC 367 / BCRC 12310 / CIP 105137 / JCM 1170 / LMG 11437 / NCIMB 947 / NCTC 947) (Lactobacillus brevis)).